The primary structure comprises 350 residues: 3-dehydroquinate synthase (350 aa).

NAD(+) contacts are provided by residues G106–D110, T130–S131, K143, and K152. Zn(2+) contacts are provided by E185, H246, and H263.

The protein belongs to the sugar phosphate cyclases superfamily. Dehydroquinate synthase family. The cofactor is Co(2+). It depends on Zn(2+) as a cofactor. Requires NAD(+) as cofactor.

The protein localises to the cytoplasm. The catalysed reaction is 7-phospho-2-dehydro-3-deoxy-D-arabino-heptonate = 3-dehydroquinate + phosphate. It participates in metabolic intermediate biosynthesis; chorismate biosynthesis; chorismate from D-erythrose 4-phosphate and phosphoenolpyruvate: step 2/7. Functionally, catalyzes the conversion of 3-deoxy-D-arabino-heptulosonate 7-phosphate (DAHP) to dehydroquinate (DHQ). The sequence is that of 3-dehydroquinate synthase from Clostridium perfringens (strain SM101 / Type A).